A 1382-amino-acid polypeptide reads, in one-letter code: Ninein-like protein (1382 aa).

EF-hand domains lie at 7–42 (HYVS…LHLE) and 41–76 (LEQQ…VLSS). A disordered region spans residues 144 to 164 (ASLESVESPKSDEEAESTKEA). Position 148 is a phosphoserine (Ser148). The span at 150–164 (ESPKSDEEAESTKEA) shows a compositional bias: basic and acidic residues. EF-hand domains lie at 196–231 (TPES…VGLQ) and 233–268 (LEKE…HEPA). The Ca(2+) site is built by Asp246, Asp248, Asp250, Lys252, and Glu257. 3 coiled-coil regions span residues 384–424 (QELS…MDDC), 484–579 (AGLR…WARL), and 616–699 (IETE…QLQD). The short motif at 495–497 (KEN) is the KEN box element. Positions 633–641 (RTQLETKVN) match the D-box motif. 2 disordered regions span residues 857–969 (PLAW…ASCR) and 982–1006 (RARS…GALE). A compositionally biased stretch (low complexity) spans 991-1004 (QEQASEQQARAEGA). A coiled-coil region spans residues 1046-1375 (ETKIALEREK…RALNKLVSRI (330 aa)).

In terms of assembly, interacts with gamma-tubulin and TUBGCP4. Interacts with anaphase promoting complex/cyclosome (APC/C). Interacts with CDC20 and FZR1. Isoform 2 interacts with LCA5 and USH2A. Isoform 2 interacts with DZANK1. Post-translationally, phosphorylated by PLK1 which disrupts its centrosome association and interaction with gamma-tubulin. Ubiquitinated by the APC/C complex leading to its degradation. In terms of tissue distribution, expressed in KYSE-150 esophageal carcinoma, HeLa cervical carcinoma and U2OS osteosarcoma cells. Expression is regulated in a cell cycle-dependent manner and peaks during G2/M phase (at protein level). Expressed in fetal heart, skeletal muscle, liver, lung and cochlea, and in adult brain, testis, kidney and retina.

It localises to the cytoplasm. The protein resides in the cytoskeleton. It is found in the microtubule organizing center. Its subcellular location is the centrosome. In terms of biological role, involved in the microtubule organization in interphase cells. Overexpression induces the fragmentation of the Golgi, and causes lysosomes to disperse toward the cell periphery; it also interferes with mitotic spindle assembly. Involved in vesicle transport in photoreceptor cells. May play a role in ovarian carcinogenesis. In Homo sapiens (Human), this protein is Ninein-like protein (NINL).